The chain runs to 100 residues: Aspartyl/glutamyl-tRNA(Asn/Gln) amidotransferase subunit C (100 aa).

Belongs to the GatC family. As to quaternary structure, heterotrimer of A, B and C subunits.

The enzyme catalyses L-glutamyl-tRNA(Gln) + L-glutamine + ATP + H2O = L-glutaminyl-tRNA(Gln) + L-glutamate + ADP + phosphate + H(+). The catalysed reaction is L-aspartyl-tRNA(Asn) + L-glutamine + ATP + H2O = L-asparaginyl-tRNA(Asn) + L-glutamate + ADP + phosphate + 2 H(+). Its function is as follows. Allows the formation of correctly charged Asn-tRNA(Asn) or Gln-tRNA(Gln) through the transamidation of misacylated Asp-tRNA(Asn) or Glu-tRNA(Gln) in organisms which lack either or both of asparaginyl-tRNA or glutaminyl-tRNA synthetases. The reaction takes place in the presence of glutamine and ATP through an activated phospho-Asp-tRNA(Asn) or phospho-Glu-tRNA(Gln). The sequence is that of Aspartyl/glutamyl-tRNA(Asn/Gln) amidotransferase subunit C from Staphylococcus carnosus (strain TM300).